The sequence spans 275 residues: Echotoxin-2 (275 aa).

An N-terminal signal peptide occupies residues 1 to 23 (MKRNILALVVVVALISQSRPAES). Positions 23-32 (SAGGTIIATL) are plays an important role in the hemolytic activity. Residues 49-67 (ETGASVASAAAAATSSDYS) form an N-terminal region region. Residues Gly123, Ser141, Pro143, Tyr176, and Tyr177 each coordinate phosphocholine. Positions 141-156 (SAPYNFDFYSNWLAVG) are trp-rich region, which is important for the binding to lipid membrane. Positions 249–275 (RAIQQELARRAEEEKQRKRKALDEMLK) are excised as a propeptide.

The protein belongs to the actinoporin family. Sea anemone subfamily. In terms of assembly, octamer or nonamer in membranes. Monomer in the soluble state. Salivary gland.

The protein localises to the secreted. The protein resides in the nematocyst. It is found in the target cell membrane. Functionally, pore-forming protein that forms cations-selective hydrophilic pores of around 1 nm and causes cardiac stimulation and cytolysis. Pore formation is a multi-step process that involves specific recognition of membrane sphingomyelin (but neither cholesterol nor phosphatidylcholine) using aromatic rich region and adjacent phosphocholine (POC) binding site, firm binding to the membrane (mainly driven by hydrophobic interactions) accompanied by the transfer of the N-terminal region to the lipid-water interface and finally pore formation after oligomerization of monomers. Exhibits both hemolytic and lethal activities. Gangliosides potently inhibits the hemolytic activity. This chain is Echotoxin-2, found in Monoplex parthenopeus (Giant triton).